Reading from the N-terminus, the 559-residue chain is NXPE family member 2 (559 aa).

A helical transmembrane segment spans residues 17 to 37; it reads AIARKLLLMLTFILIFWIIYL.

Belongs to the NXPE family.

It is found in the membrane. The protein is NXPE family member 2 (NXPE2) of Homo sapiens (Human).